Here is a 361-residue protein sequence, read N- to C-terminus: Cdc42 effector protein 1 (361 aa).

Positions 1-29 are disordered; sequence MPGPQGAGGAPAMNLGKLSPVGWVSSSQG. Phosphoserine is present on residues serine 19 and serine 27. Phosphothreonine is present on threonine 34. The region spanning 38 to 52 is the CRIB domain; that stretch reads ISPPLGDFRHTMHVG. Position 39 is a phosphoserine (serine 39). Arginine 53 is modified (omega-N-methylarginine). Phosphoserine is present on residues serine 65, serine 73, serine 77, serine 101, serine 113, serine 121, serine 139, serine 180, serine 190, serine 192, and serine 195. A disordered region spans residues 161 to 186; it reads CTISRLPRPEKPRDRDRDSSFPAEPE. Residues 167–186 show a composition bias toward basic and acidic residues; sequence PRPEKPRDRDRDSSFPAEPE. Disordered regions lie at residues 218–300 and 320–361; these read EGSA…SRHH and SWGS…EVKV. Repeat copies occupy residues 220–226, 229–235, 236–242, and 243–249. Residues 220–249 are 4 X 7 AA tandem repeats of [PT]-[AT]-A-[ENT]-[PT]-[PTS]-[AG]; sequence SAAETPAPAPAASPPASVANPPAPASSPSL. 3 positions are modified to phosphoserine: serine 270, serine 320, and serine 323. Over residues 332 to 347 the composition is skewed to polar residues; that stretch reads QAGSRTPVPSTVQANT. The span at 351-361 shows a compositional bias: acidic residues; sequence ADAEEDDEVKV.

Belongs to the BORG/CEP family. As to quaternary structure, interacts with RHOQ and CDC42, in a GTP-dependent manner.

It is found in the endomembrane system. The protein resides in the cytoplasm. It localises to the cytoskeleton. Its function is as follows. Probably involved in the organization of the actin cytoskeleton. Induced membrane extensions in fibroblasts. The sequence is that of Cdc42 effector protein 1 from Bos taurus (Bovine).